Here is a 545-residue protein sequence, read N- to C-terminus: Zinc finger protein with KRAB and SCAN domains 4 (545 aa).

Residues 1–22 (MAREPRKNAALDAQSAEDQTGL) form a disordered region. Glycyl lysine isopeptide (Lys-Gly) (interchain with G-Cter in SUMO2) cross-links involve residues lysine 26 and lysine 29. Positions 34 to 55 (ALTAEVRAPCSPARGPERSRQR) are disordered. Residues 53–135 (RQRFRGFRYP…VLLEYLERQL (83 aa)) enclose the SCAN box domain. Residues lysine 178 and lysine 222 each participate in a glycyl lysine isopeptide (Lys-Gly) (interchain with G-Cter in SUMO2) cross-link. A KRAB domain is found at 221-317 (LKMEDVALTL…QRKQKNAIGS (97 aa)). C2H2-type zinc fingers lie at residues 320-342 (HYCH…RRIH), 348-370 (YECE…QRVH), 376-398 (YECE…QRTH), 404-426 (YECD…HKIH), and 432-454 (YQCN…QRIH). Positions 455-467 (GDKNVQNPEHGES) are enriched in basic and acidic residues. Residues 455-480 (GDKNVQNPEHGESWESQGRTESQWEN) are disordered. Residues 468–480 (WESQGRTESQWEN) show a composition bias toward polar residues. 2 consecutive C2H2-type zinc fingers follow at residues 487 to 509 (YKCN…QKIH) and 515 to 537 (YQCD…QRSH).

This sequence belongs to the krueppel C2H2-type zinc-finger protein family. In terms of tissue distribution, expressed in adult heart, brain, placenta, lung and kidney, but not in adult liver and skeletal muscle. In 17-day old embryo, detected in liver, skeletal muscle, brain, heart and small intestine.

Its subcellular location is the nucleus. In terms of biological role, may be involved in the transcriptional activation of MDM2 and EP300 genes. The sequence is that of Zinc finger protein with KRAB and SCAN domains 4 (ZKSCAN4) from Homo sapiens (Human).